Reading from the N-terminus, the 214-residue chain is MRHVDGVVGNRYDDPDLDEQLHAHEDAGRLERVVLEAGQRKRSRLRVETDAGTDLGIVVDQPELRAGDVLFLDDDAAAVVEFESRTAFVVDLPSPGPETVAAAVELGHRVGNQHWDIAIEGGTVYVPVEADRRIIEDVLGEHIPDSGTTRYASVDASLFIGENAEPSGVDHSHEATDSGHGYGEDHDHDHSHDHNHDHDHNHDHDHSHSHDSHE.

Residues 163-214 are disordered; the sequence is NAEPSGVDHSHEATDSGHGYGEDHDHDHSHDHNHDHDHNHDHDHSHSHDSHE. Over residues 168 to 214 the composition is skewed to basic and acidic residues; sequence GVDHSHEATDSGHGYGEDHDHDHSHDHNHDHDHNHDHDHSHSHDSHE.

The protein belongs to the UreE family.

The protein localises to the cytoplasm. Involved in urease metallocenter assembly. Binds nickel. Probably functions as a nickel donor during metallocenter assembly. The polypeptide is Urease accessory protein UreE (Natronomonas pharaonis (strain ATCC 35678 / DSM 2160 / CIP 103997 / JCM 8858 / NBRC 14720 / NCIMB 2260 / Gabara) (Halobacterium pharaonis)).